A 453-amino-acid chain; its full sequence is Ribosomal protein uS12 methylthiotransferase RimO (453 aa).

One can recognise an MTTase N-terminal domain in the interval 9-124; sequence PKIGFVSLGC…VMDAVHKHMP (116 aa). The [4Fe-4S] cluster site is built by Cys18, Cys54, Cys83, Cys155, Cys159, and Cys162. The 242-residue stretch at 141–382 folds into the Radical SAM core domain; sequence LTPKHFAYLK…MLLQEEISKK (242 aa). Positions 385–453 constitute a TRAM domain; the sequence is QAKVGKTMRV…ADAHDLWAEA (69 aa).

It belongs to the methylthiotransferase family. RimO subfamily. [4Fe-4S] cluster is required as a cofactor.

It localises to the cytoplasm. It catalyses the reaction L-aspartate(89)-[ribosomal protein uS12]-hydrogen + (sulfur carrier)-SH + AH2 + 2 S-adenosyl-L-methionine = 3-methylsulfanyl-L-aspartate(89)-[ribosomal protein uS12]-hydrogen + (sulfur carrier)-H + 5'-deoxyadenosine + L-methionine + A + S-adenosyl-L-homocysteine + 2 H(+). Catalyzes the methylthiolation of an aspartic acid residue of ribosomal protein uS12. This Janthinobacterium sp. (strain Marseille) (Minibacterium massiliensis) protein is Ribosomal protein uS12 methylthiotransferase RimO.